The chain runs to 293 residues: Microtubule-associated protein RP/EB family member 1B (293 aa).

One can recognise a Calponin-homology (CH) domain in the interval 13 to 115 (FVGRNEILSW…FLQWLKRFCD (103 aa)). 2 disordered regions span residues 124 to 188 (ENYN…SAEV) and 262 to 293 (LGLEGYEEEGKEEEEEEEEEEEEAAAAAETQT). A compositionally biased stretch (basic and acidic residues) spans 129–141 (VERRSRGGREKSV). Over residues 151–166 (LQTNNMHHPPVATSNK) the composition is skewed to polar residues. The EB1 C-terminal domain maps to 180 to 250 (GGSNSSAEVQ…LYATDANESV (71 aa)). Acidic residues predominate over residues 266-285 (GYEEEGKEEEEEEEEEEEEA).

It belongs to the MAPRE family. Homodimer and heterodimer with EB1A. Highly expressed in guard cells of leaf stomata, pollen grains and pollen tubes. Expressed in young roots.

It localises to the cytoplasm. Its subcellular location is the cytoskeleton. The protein localises to the spindle pole. The protein resides in the phragmoplast. In terms of biological role, binds to the plus end of microtubules and regulates the dynamics of the microtubule cytoskeleton. May be involved in anchoring microtubules to their nucleation sites and/or functioning as a reservoir for distribution to the growing end. In plants, microtubule minus ends are not necessarily severed from the nucleation site and transported to the plus end of a microtubule as part of the recycling process. May play a role in endomembrane organization during polarized growth of plant cells. The polypeptide is Microtubule-associated protein RP/EB family member 1B (EB1B) (Arabidopsis thaliana (Mouse-ear cress)).